The sequence spans 1008 residues: DNA polymerase catalytic subunit (1008 aa).

The protein belongs to the DNA polymerase type-B family.

The protein localises to the host nucleus. It carries out the reaction DNA(n) + a 2'-deoxyribonucleoside 5'-triphosphate = DNA(n+1) + diphosphate. This Equine herpesvirus 2 (strain 86/87) (EHV-2) protein is DNA polymerase catalytic subunit (9).